Consider the following 944-residue polypeptide: Leucine--tRNA ligase 2 (944 aa).

A 'HIGH' region motif is present at residues 36 to 46 (PYPNSPFHLGH). The short motif at 621-625 (KMSKS) is the 'KMSKS' region element. Lysine 624 provides a ligand contact to ATP.

This sequence belongs to the class-I aminoacyl-tRNA synthetase family.

The protein localises to the cytoplasm. It catalyses the reaction tRNA(Leu) + L-leucine + ATP = L-leucyl-tRNA(Leu) + AMP + diphosphate. This Sulfurisphaera tokodaii (strain DSM 16993 / JCM 10545 / NBRC 100140 / 7) (Sulfolobus tokodaii) protein is Leucine--tRNA ligase 2.